The primary structure comprises 74 residues: LMTGVESARDAYIAKPHNCVYECFDAFSSYCNGVCTKNGAKSGYCLILGTYGNGCWCIALPDNVPIRIPGKCHR.

An N-terminal signal peptide occupies residues 1–7; that stretch reads LMTGVES. The 65-residue stretch at 9–73 folds into the LCN-type CS-alpha/beta domain; it reads RDAYIAKPHN…VPIRIPGKCH (65 aa). Disulfide bonds link C19–C72, C23–C45, C31–C55, and C35–C57. A propeptide (removed by a carboxypeptidase) is located at residue R74.

It belongs to the long (4 C-C) scorpion toxin superfamily. Sodium channel inhibitor family. Alpha subfamily. As to expression, expressed by the venom gland.

It localises to the secreted. Alpha toxins bind voltage-independently at site-3 of sodium channels (Nav) and inhibit the inactivation of the activated channels, thereby blocking neuronal transmission. The sequence is that of Sodium channel neurotoxin MeuNaTxalpha-11 from Mesobuthus eupeus (Lesser Asian scorpion).